Here is a 522-residue protein sequence, read N- to C-terminus: BAR/IMD domain-containing adapter protein 2-like 2 (522 aa).

The IMD domain occupies 1–239 (MAPEMDQFYR…HSPGLLGPAL (239 aa)). Disordered stretches follow at residues 220–325 (SEAS…GGGG) and 404–502 (PMSP…GTNP). A phosphoserine mark is found at S231, S272, and S303. The segment covering 297–317 (RTPSASSLYASSTQRSRSNSF) has biased composition (polar residues). In terms of domain architecture, SH3 spans 324-387 (GGARRVRALV…PEAYVKPVEE (64 aa)). A compositionally biased stretch (low complexity) spans 443-456 (SQSRSRTPSRVPSR). Pro residues predominate over residues 457-466 (APSPAPPPLP). S472 and S475 each carry phosphoserine.

As to expression, expressed in the epithelial layer of the intestine and in the kidney.

The protein resides in the cell membrane. Its subcellular location is the cell junction. The protein localises to the cytoplasmic vesicle membrane. Functionally, phosphoinositides-binding protein that induces the formation of planar or gently curved membrane structures. Binds to phosphoinositides, including to phosphatidylinositol 4,5-bisphosphate (PtdIns(4,5)P2) headgroups. There seems to be no clear preference for a specific phosphoinositide. This is BAR/IMD domain-containing adapter protein 2-like 2 (Baiap2l2) from Mus musculus (Mouse).